Consider the following 71-residue polypeptide: High-potential iron-sulfur protein isozyme 2 (71 aa).

Residues cysteine 34, cysteine 37, cysteine 51, and cysteine 65 each contribute to the [4Fe-4S] cluster site.

Belongs to the high-potential iron-sulfur protein (HiPIP) family. In terms of assembly, homodimer.

Specific class of high-redox-potential 4Fe-4S ferredoxins. Functions in anaerobic electron transport in most purple and in some other photosynthetic bacteria and in at least one genus (Paracoccus) of halophilic, denitrifying bacteria. The sequence is that of High-potential iron-sulfur protein isozyme 2 (hip2) from Ectothiorhodospira shaposhnikovii (Ectothiorhodospira vacuolata).